Consider the following 288-residue polypeptide: MEIKLEQLGYCYQKNSPFEKRALLDVNVSFDSGSYSAIIGHTGSGKSTLLQHLNALLMPTEGKITVGEREIVAGVKQKKLRDLRKKVGIVFQFPEAQLFEETVEKDICFGPMNFGVSEEDAKLRAKKVIYEVGLTEEILSRSPFELSGGQMRRVAIAGVLAMDPEVLVLDEPTAGLDPHGREEIMEMFYNLHKEKGLTTVLVTHSMEDAARYAEKIVLMKAGTVLQIGSPREIFAKPDALVDLGLSVPDVVRFQGLFERKFNVKLTKTCLTIAELITEMAPYLAKGGA.

An ABC transporter domain is found at 3 to 246; the sequence is IKLEQLGYCY…PDALVDLGLS (244 aa). ATP is bound at residue 40 to 47; sequence GHTGSGKS.

Belongs to the ABC transporter superfamily. Energy-coupling factor EcfA family. As to quaternary structure, forms a stable energy-coupling factor (ECF) transporter complex composed of 2 membrane-embedded substrate-binding proteins (S component), 2 ATP-binding proteins (A component) and 2 transmembrane proteins (T component).

The protein localises to the cell membrane. ATP-binding (A) component of a common energy-coupling factor (ECF) ABC-transporter complex. Unlike classic ABC transporters this ECF transporter provides the energy necessary to transport a number of different substrates. The protein is Energy-coupling factor transporter ATP-binding protein EcfA2 of Listeria welshimeri serovar 6b (strain ATCC 35897 / DSM 20650 / CCUG 15529 / CIP 8149 / NCTC 11857 / SLCC 5334 / V8).